A 149-amino-acid chain; its full sequence is Nucleoside diphosphate kinase (149 aa).

The ATP site is built by K9, F57, R85, T91, R102, and N112. Residue H115 is the Pros-phosphohistidine intermediate of the active site.

Belongs to the NDK family. In terms of assembly, homotetramer. Mg(2+) is required as a cofactor.

It is found in the cytoplasm. It catalyses the reaction dZDP + ATP = dZTP + ADP. The catalysed reaction is a 2'-deoxyribonucleoside 5'-diphosphate + ATP = a 2'-deoxyribonucleoside 5'-triphosphate + ADP. It carries out the reaction a ribonucleoside 5'-diphosphate + ATP = a ribonucleoside 5'-triphosphate + ADP. Its pathway is purine metabolism. Its function is as follows. Major role in the synthesis of nucleoside triphosphates other than ATP. The ATP gamma phosphate is transferred to the NDP beta phosphate via a ping-pong mechanism, using a phosphorylated active-site intermediate. (Microbial infection) Catalyzes the phosphorylation of dZDP to dZTP, when the bacterium is infected by a phage that produces the substrate for the synthesis of dZTP (2- amino-2'-deoxyadenosine 5'-triphosphate), which is then used by the phage as a DNA polymerase substrate. This chain is Nucleoside diphosphate kinase, found in Picosynechococcus sp. (strain ATCC 27264 / PCC 7002 / PR-6) (Agmenellum quadruplicatum).